The chain runs to 96 residues: Aspartyl/glutamyl-tRNA(Asn/Gln) amidotransferase subunit C (96 aa).

This sequence belongs to the GatC family. As to quaternary structure, heterotrimer of A, B and C subunits.

It catalyses the reaction L-glutamyl-tRNA(Gln) + L-glutamine + ATP + H2O = L-glutaminyl-tRNA(Gln) + L-glutamate + ADP + phosphate + H(+). The catalysed reaction is L-aspartyl-tRNA(Asn) + L-glutamine + ATP + H2O = L-asparaginyl-tRNA(Asn) + L-glutamate + ADP + phosphate + 2 H(+). Allows the formation of correctly charged Asn-tRNA(Asn) or Gln-tRNA(Gln) through the transamidation of misacylated Asp-tRNA(Asn) or Glu-tRNA(Gln) in organisms which lack either or both of asparaginyl-tRNA or glutaminyl-tRNA synthetases. The reaction takes place in the presence of glutamine and ATP through an activated phospho-Asp-tRNA(Asn) or phospho-Glu-tRNA(Gln). In Bacillus licheniformis (strain ATCC 14580 / DSM 13 / JCM 2505 / CCUG 7422 / NBRC 12200 / NCIMB 9375 / NCTC 10341 / NRRL NRS-1264 / Gibson 46), this protein is Aspartyl/glutamyl-tRNA(Asn/Gln) amidotransferase subunit C.